The following is a 761-amino-acid chain: 5-methyltetrahydropteroyltriglutamate--homocysteine methyltransferase (761 aa).

5-methyltetrahydropteroyltri-L-glutamate is bound by residues 16-19 and K116; that span reads RELK. Residues 435 to 437 and E488 each bind L-homocysteine; that span reads IGS. L-methionine is bound by residues 435–437 and E488; that span reads IGS. Residues 519 to 520 and W565 contribute to the 5-methyltetrahydropteroyltri-L-glutamate site; that span reads RC. D603 lines the L-homocysteine pocket. Residue D603 coordinates L-methionine. E609 is a binding site for 5-methyltetrahydropteroyltri-L-glutamate. Residues H645, C647, and E669 each coordinate Zn(2+). Catalysis depends on H698, which acts as the Proton donor. Residue C730 participates in Zn(2+) binding.

Belongs to the vitamin-B12 independent methionine synthase family. It depends on Zn(2+) as a cofactor.

It catalyses the reaction 5-methyltetrahydropteroyltri-L-glutamate + L-homocysteine = tetrahydropteroyltri-L-glutamate + L-methionine. It participates in amino-acid biosynthesis; L-methionine biosynthesis via de novo pathway; L-methionine from L-homocysteine (MetE route): step 1/1. Catalyzes the transfer of a methyl group from 5-methyltetrahydrofolate to homocysteine resulting in methionine formation. This Hahella chejuensis (strain KCTC 2396) protein is 5-methyltetrahydropteroyltriglutamate--homocysteine methyltransferase.